The sequence spans 1186 residues: ATP-dependent helicase/deoxyribonuclease subunit B (1186 aa).

This sequence belongs to the helicase family. AddB/RexB type 2 subfamily. Heterodimer of AddA and RexB. Mg(2+) serves as cofactor.

The heterodimer acts as both an ATP-dependent DNA helicase and an ATP-dependent, dual-direction single-stranded exonuclease. Recognizes the chi site generating a DNA molecule suitable for the initiation of homologous recombination. This subunit has 5' -&gt; 3' nuclease activity but not helicase activity. This is ATP-dependent helicase/deoxyribonuclease subunit B from Latilactobacillus sakei subsp. sakei (strain 23K) (Lactobacillus sakei subsp. sakei).